Consider the following 406-residue polypeptide: Ribulose bisphosphate carboxylase large chain (406 aa).

2 residues coordinate substrate: Asn-101 and Thr-151. Lys-153 (proton acceptor) is an active-site residue. Position 155 (Lys-155) interacts with substrate. Positions 179, 181, and 182 each coordinate Mg(2+). Residue Lys-179 is modified to N6-carboxylysine. His-272 (proton acceptor) is an active-site residue. Residues Arg-273, His-305, and Ser-357 each coordinate substrate.

The protein belongs to the RuBisCO large chain family. Type I subfamily. In terms of assembly, heterohexadecamer of 8 large chains and 8 small chains; disulfide-linked. The disulfide link is formed within the large subunit homodimers. The cofactor is Mg(2+). Post-translationally, the disulfide bond which can form in the large chain dimeric partners within the hexadecamer appears to be associated with oxidative stress and protein turnover.

Its subcellular location is the plastid. It localises to the chloroplast. It carries out the reaction 2 (2R)-3-phosphoglycerate + 2 H(+) = D-ribulose 1,5-bisphosphate + CO2 + H2O. The catalysed reaction is D-ribulose 1,5-bisphosphate + O2 = 2-phosphoglycolate + (2R)-3-phosphoglycerate + 2 H(+). Its function is as follows. RuBisCO catalyzes two reactions: the carboxylation of D-ribulose 1,5-bisphosphate, the primary event in carbon dioxide fixation, as well as the oxidative fragmentation of the pentose substrate in the photorespiration process. Both reactions occur simultaneously and in competition at the same active site. This is Ribulose bisphosphate carboxylase large chain (rbcL) from Trichomanes striatum (Fern).